We begin with the raw amino-acid sequence, 94 residues long: Aspartyl/glutamyl-tRNA(Asn/Gln) amidotransferase subunit C (94 aa).

The protein belongs to the GatC family. Heterotrimer of A, B and C subunits.

It catalyses the reaction L-glutamyl-tRNA(Gln) + L-glutamine + ATP + H2O = L-glutaminyl-tRNA(Gln) + L-glutamate + ADP + phosphate + H(+). The enzyme catalyses L-aspartyl-tRNA(Asn) + L-glutamine + ATP + H2O = L-asparaginyl-tRNA(Asn) + L-glutamate + ADP + phosphate + 2 H(+). Its function is as follows. Allows the formation of correctly charged Asn-tRNA(Asn) or Gln-tRNA(Gln) through the transamidation of misacylated Asp-tRNA(Asn) or Glu-tRNA(Gln) in organisms which lack either or both of asparaginyl-tRNA or glutaminyl-tRNA synthetases. The reaction takes place in the presence of glutamine and ATP through an activated phospho-Asp-tRNA(Asn) or phospho-Glu-tRNA(Gln). This is Aspartyl/glutamyl-tRNA(Asn/Gln) amidotransferase subunit C from Desulfotalea psychrophila (strain LSv54 / DSM 12343).